A 996-amino-acid polypeptide reads, in one-letter code: NACHT, LRR and PYD domains-containing protein 9 (996 aa).

The Pyrin domain occupies 1–94 (MAESFFSDFG…WRKARNEIRQ (94 aa)). Residues 150–469 (PTVVLHGPEG…FYMFTRPKDP (320 aa)) enclose the NACHT domain. 156-163 (GPEGIGKT) is a binding site for ATP. LRR repeat units follow at residues 748–769 (KLNLLSLCENALKDDGVLVLCE), 777–798 (ALEALLLSHCCFSSAACDHLSQ), 805–825 (SLTFLDLGSNVLKDEGVTTLC), 834–855 (NLQELWLMNCYFTSVCCVDIAT), 862–883 (KLKTLKLGNNKIYDAGAKQLCK), and 891–914 (KLENLGLEACELSPASCEDLASAL).

This sequence belongs to the NLRP family. Sensor component of NLRP9 inflammasomes. Inflammasomes are supramolecular complexes that assemble in the cytosol in response to pathogens, such as rotavirus, and play critical roles in innate immunity and inflammation. The core of NLRP9 inflammasomes consists of a signal sensor component (NLRP9), an adapter (ASC/PYCARD), which recruits an effector pro-inflammatory caspase (CASP1). Within the complex, NLRP9 and PYCARD interact via their respective DAPIN/pyrin domains. This interaction initiates speck formation (nucleation) which greatly enhances further addition of soluble PYCARD molecules to the speck in a prion-like polymerization process. Clustered PYCARD nucleates the formation of CASP1 filaments through the interaction of their respective CARD domains, acting as a platform for CASP1 polymerization. CASP1 filament formation increases local enzyme concentration, resulting in trans-autocleavage and activation. Active CASP1 then processes IL1B and IL18 precursors, leading to the release of mature cytokines in the extracellular milieu and inflammatory response. Interacts with DHX9 upon rotavirus infection; this interaction may trigger inflammasome activation and inflammatory response. As to expression, detected exclusively in testis and ovary, and at high level in the oocyte from antral follicles.

Its subcellular location is the cytoplasm. The protein localises to the inflammasome. In terms of biological role, as the sensor component of the NLRP9 inflammasome, plays a crucial role in innate immunity and inflammation. In response to pathogens, including rotavirus, initiates the formation of the inflammasome polymeric complex, made of NLRP9, PYCARD and CASP1. Recruitment of proCASP1 to the inflammasome promotes its activation and CASP1-catalyzed IL1B and IL18 maturation and release in the extracellular milieu. The active cytokines stimulate inflammatory responses. Inflammasomes can also induce pyroptosis, an inflammatory form of programmed cell death. NLRP9 inflammasome activation may be initiated by DHX9 interaction with viral double-stranded RNA (dsRNA), preferentially to short dsRNA segments. The polypeptide is NACHT, LRR and PYD domains-containing protein 9 (NLRP9) (Bos taurus (Bovine)).